The chain runs to 145 residues: Probable D-aminoacyl-tRNA deacylase (145 aa).

This sequence belongs to the DTD family. In terms of assembly, homodimer.

It is found in the cytoplasm. The catalysed reaction is glycyl-tRNA(Ala) + H2O = tRNA(Ala) + glycine + H(+). It carries out the reaction a D-aminoacyl-tRNA + H2O = a tRNA + a D-alpha-amino acid + H(+). Its function is as follows. An aminoacyl-tRNA editing enzyme that deacylates mischarged D-aminoacyl-tRNAs. Also deacylates mischarged glycyl-tRNA(Ala), protecting cells against glycine mischarging by AlaRS. Acts via tRNA-based rather than protein-based catalysis; rejects L-amino acids rather than detecting D-amino acids in the active site. By recycling D-aminoacyl-tRNA to D-amino acids and free tRNA molecules, this enzyme counteracts the toxicity associated with the formation of D-aminoacyl-tRNA entities in vivo and helps enforce protein L-homochirality. The sequence is that of Probable D-aminoacyl-tRNA deacylase from Shigella flexneri serotype 5b (strain 8401).